The sequence spans 507 residues: Histidine ammonia-lyase (507 aa).

The 5-imidazolinone (Ala-Gly) cross-link spans 141–143; it reads ASG. A 2,3-didehydroalanine (Ser) modification is found at Ser-142.

Belongs to the PAL/histidase family. In terms of processing, contains an active site 4-methylidene-imidazol-5-one (MIO), which is formed autocatalytically by cyclization and dehydration of residues Ala-Ser-Gly.

The protein localises to the cytoplasm. The catalysed reaction is L-histidine = trans-urocanate + NH4(+). It participates in amino-acid degradation; L-histidine degradation into L-glutamate; N-formimidoyl-L-glutamate from L-histidine: step 1/3. The protein is Histidine ammonia-lyase of Burkholderia mallei (strain NCTC 10247).